A 131-amino-acid polypeptide reads, in one-letter code: Small ribosomal subunit protein bS6 (131 aa).

Residues 96-131 form a disordered region; it reads VTAPSPMMKEEKSKSLLAKDEAAAPAPAPATEQATA. The span at 103–117 shows a compositional bias: basic and acidic residues; that stretch reads MKEEKSKSLLAKDEA. Over residues 118-131 the composition is skewed to low complexity; the sequence is AAPAPAPATEQATA.

The protein belongs to the bacterial ribosomal protein bS6 family.

In terms of biological role, binds together with bS18 to 16S ribosomal RNA. The chain is Small ribosomal subunit protein bS6 from Methylobacillus flagellatus (strain ATCC 51484 / DSM 6875 / VKM B-1610 / KT).